A 306-amino-acid chain; its full sequence is tRNA dimethylallyltransferase (306 aa).

ATP is bound at residue 15–22; sequence GPTASGKS. Residue 17–22 coordinates substrate; the sequence is TASGKS. Residues 40–43 are interaction with substrate tRNA; it reads DSMQ.

Belongs to the IPP transferase family. Monomer. Mg(2+) is required as a cofactor.

It carries out the reaction adenosine(37) in tRNA + dimethylallyl diphosphate = N(6)-dimethylallyladenosine(37) in tRNA + diphosphate. In terms of biological role, catalyzes the transfer of a dimethylallyl group onto the adenine at position 37 in tRNAs that read codons beginning with uridine, leading to the formation of N6-(dimethylallyl)adenosine (i(6)A). The polypeptide is tRNA dimethylallyltransferase (Methylobacterium sp. (strain 4-46)).